Here is a 100-residue protein sequence, read N- to C-terminus: MARKSLIQREKKRRNLEQKYHLIRRSSKQEIRKVTSLSDKWEIHGKLQSPPRNSAPARLHRRCFLTGRPRANIRDFGLSGHILREMVHTCLLPGATRSSW.

Belongs to the universal ribosomal protein uS14 family. In terms of assembly, component of the chloroplast small ribosomal subunit (SSU). Mature 70S chloroplast ribosomes of higher plants consist of a small (30S) and a large (50S) subunit. The 30S small subunit contains 1 molecule of ribosomal RNA (16S rRNA) and 24 different proteins. The 50S large subunit contains 3 rRNA molecules (23S, 5S and 4.5S rRNA) and 33 different proteins.

It localises to the plastid. It is found in the chloroplast. In terms of biological role, component of the chloroplast ribosome (chloro-ribosome), a dedicated translation machinery responsible for the synthesis of chloroplast genome-encoded proteins, including proteins of the transcription and translation machinery and components of the photosynthetic apparatus. The protein is Small ribosomal subunit protein uS14c of Spinacia oleracea (Spinach).